Consider the following 366-residue polypeptide: Dihydroflavonol 4-reductase (366 aa).

Residues K45 and Y164 each contribute to the NADP(+) site.

The protein belongs to the NAD(P)-dependent epimerase/dehydratase family. Dihydroflavonol-4-reductase subfamily.

It carries out the reaction a (2R,3S,4S)-leucoanthocyanidin + NADP(+) = a (2R,3R)-dihydroflavonol + NADPH + H(+). It catalyses the reaction (2S)-flavan-4-ol + NADP(+) = (2S)-flavanone + NADPH + H(+). It participates in pigment biosynthesis; anthocyanin biosynthesis. In terms of biological role, bifunctional enzyme involved in flavonoid metabolism. This Gerbera hybrida (Daisy) protein is Dihydroflavonol 4-reductase (DFR).